The primary structure comprises 1486 residues: Chromosome partition protein MukB (1486 aa).

Residue 34 to 41 (GGNGAGKS) participates in ATP binding. 3 coiled-coil regions span residues 326-418 (LEAD…QYNQ), 444-480 (LETF…QAYQ), and 509-603 (RHLA…RAPV). Positions 666-783 (PGGSEDQRLN…EVPLFGRAAR (118 aa)) are flexible hinge. 3 coiled-coil regions span residues 835–923 (EAEI…AKLE), 977–1115 (EMLS…TAKA), and 1209–1266 (VEAI…QNVS).

It belongs to the SMC family. MukB subfamily. Homodimerization via its hinge domain. Binds to DNA via its C-terminal region. Interacts, and probably forms a ternary complex, with MukE and MukF via its C-terminal region. The complex formation is stimulated by calcium or magnesium. Interacts with tubulin-related protein FtsZ.

It localises to the cytoplasm. The protein resides in the nucleoid. In terms of biological role, plays a central role in chromosome condensation, segregation and cell cycle progression. Functions as a homodimer, which is essential for chromosome partition. Involved in negative DNA supercoiling in vivo, and by this means organize and compact chromosomes. May achieve or facilitate chromosome segregation by condensation DNA from both sides of a centrally located replisome during cell division. The polypeptide is Chromosome partition protein MukB (Escherichia coli O9:H4 (strain HS)).